The following is a 702-amino-acid chain: K(+)-insensitive pyrophosphate-energized proton pump (702 aa).

Transmembrane regions (helical) follow at residues 3-23, 63-83, 130-150, and 162-182; these read GIYLFVVAAALAALGYGALTI, AVVFVILTALLGISVGFGFLI, MLVAGLALLSVAFYYILLVGI, and VALGFGASLISIFARLGGGIF. Substrate is bound at residue lysine 184. Aspartate 187, aspartate 191, asparagine 214, and aspartate 217 together coordinate Mg(2+). Helical transmembrane passes span 234-254, 255-275, 294-314, 329-349, 379-399, and 407-427; these read AVTVVATMVLASIFFAGVPAM, TSMMAYPLAIGGVCILASILG, GFLVSAGASFVGIILATAIVP, GFDLFLCAVIGLLVTGLLIWV, GLAISMEATALPALIICAAII, and LFGIAITVTSMLALAGMVVAL. Aspartate 435 serves as a coordination point for Mg(2+). Transmembrane regions (helical) follow at residues 466–486, 517–537, 586–606, and 612–632; these read AVTKGYAIGSAGLGALVLFAA, YVVVGLFIGGLLPYLFGSMGM, IIPSLLPVLAPIVLYFVILGI, and AFSALGAMLLGVIVTGLFVAI. The Ca(2+) site is built by aspartate 642, aspartate 668, and aspartate 672. Lysine 675 provides a ligand contact to substrate.

This sequence belongs to the H(+)-translocating pyrophosphatase (TC 3.A.10) family. K(+)-insensitive subfamily. In terms of assembly, homodimer. Mg(2+) serves as cofactor.

The protein resides in the cell inner membrane. The enzyme catalyses diphosphate + H2O + H(+)(in) = 2 phosphate + 2 H(+)(out). In terms of biological role, proton pump that utilizes the energy of pyrophosphate hydrolysis as the driving force for proton movement across the membrane. Generates a proton motive force. The sequence is that of K(+)-insensitive pyrophosphate-energized proton pump from Rhodospirillum rubrum (strain ATCC 11170 / ATH 1.1.1 / DSM 467 / LMG 4362 / NCIMB 8255 / S1).